A 360-amino-acid polypeptide reads, in one-letter code: Phospho-N-acetylmuramoyl-pentapeptide-transferase (360 aa).

Helical transmembrane passes span 27–47 (GAMI…INSL), 71–91 (TPTM…LLWA), 93–113 (LASV…AIGF), 128–148 (FSGK…AFTI), 168–188 (LVIN…VGAG), 199–219 (GLAI…AYLS), 239–259 (LAVV…FNAP), 262–282 (AIFM…TVAV), 288–308 (IVLA…IIQV), and 337–357 (QVVI…LSTL).

Belongs to the glycosyltransferase 4 family. MraY subfamily. Requires Mg(2+) as cofactor.

The protein resides in the cell inner membrane. The catalysed reaction is UDP-N-acetyl-alpha-D-muramoyl-L-alanyl-gamma-D-glutamyl-meso-2,6-diaminopimeloyl-D-alanyl-D-alanine + di-trans,octa-cis-undecaprenyl phosphate = di-trans,octa-cis-undecaprenyl diphospho-N-acetyl-alpha-D-muramoyl-L-alanyl-D-glutamyl-meso-2,6-diaminopimeloyl-D-alanyl-D-alanine + UMP. The protein operates within cell wall biogenesis; peptidoglycan biosynthesis. In terms of biological role, catalyzes the initial step of the lipid cycle reactions in the biosynthesis of the cell wall peptidoglycan: transfers peptidoglycan precursor phospho-MurNAc-pentapeptide from UDP-MurNAc-pentapeptide onto the lipid carrier undecaprenyl phosphate, yielding undecaprenyl-pyrophosphoryl-MurNAc-pentapeptide, known as lipid I. The sequence is that of Phospho-N-acetylmuramoyl-pentapeptide-transferase from Brucella abortus (strain S19).